Reading from the N-terminus, the 275-residue chain is Phosphate import ATP-binding protein PstB 1 (275 aa).

An ABC transporter domain is found at L22–P261. G54–S61 is a binding site for ATP.

This sequence belongs to the ABC transporter superfamily. Phosphate importer (TC 3.A.1.7) family. As to quaternary structure, the complex is composed of two ATP-binding proteins (PstB), two transmembrane proteins (PstC and PstA) and a solute-binding protein (PstS).

It is found in the cell inner membrane. The catalysed reaction is phosphate(out) + ATP + H2O = ADP + 2 phosphate(in) + H(+). Part of the ABC transporter complex PstSACB involved in phosphate import. Responsible for energy coupling to the transport system. This chain is Phosphate import ATP-binding protein PstB 1, found in Synechococcus sp. (strain JA-2-3B'a(2-13)) (Cyanobacteria bacterium Yellowstone B-Prime).